We begin with the raw amino-acid sequence, 316 residues long: PDZ and LIM domain protein 3 (316 aa).

One can recognise a PDZ domain in the interval 1-84; sequence MPQNVVLPGP…QLCLKIDRAE (84 aa). Phosphoserine occurs at positions 18 and 93. R164 bears the Omega-N-methylarginine mark. Positions 244–303 constitute an LIM zinc-binding domain; that stretch reads PLCDKCGSGIVGAVVKARDKYRHPECFVCADCNLNLKQKGYFFVEGELYCETHARARTRP.

In terms of assembly, interacts with ACTN2. Forms a heterodimer with PDLIM4 (via LIM domain).

It is found in the cytoplasm. The protein localises to the myofibril. Its subcellular location is the sarcomere. It localises to the z line. In terms of biological role, may play a role in the organization of actin filament arrays within muscle cells. The chain is PDZ and LIM domain protein 3 (Pdlim3) from Mus musculus (Mouse).